The following is a 205-amino-acid chain: Gap junction epsilon-1 protein (205 aa).

Over 1 to 22 (MSLNYIKNFYEGCVKPPTVIGQ) the chain is Cytoplasmic. The helical transmembrane segment at 23 to 43 (FHTLFFGSVRMFFLGVLGFAV) threads the bilayer. Topologically, residues 44 to 74 (YGNEALHFSCDPDKREINLFCYNQFRPITPQ) are extracellular. Intrachain disulfides connect C53/C161 and C64/C147. The helical transmembrane segment at 75–95 (VFWALQLVIVLLPGAIFHLYA) threads the bilayer. Residues 96–111 (ACKSINQDCILQKPVY) are Cytoplasmic-facing. Residues 112 to 132 (TVIYVLSVLLRISLEVFAFWL) form a helical membrane-spanning segment. Residues 133 to 170 (QIHLFGFQVKPIYLCDTESLGKKPNILKCMVPEHFEKT) lie on the Extracellular side of the membrane. Residues 171–191 (IFLIAMYTFTVITMVLCVAEV) traverse the membrane as a helical segment. The Cytoplasmic portion of the chain corresponds to 192–205 (FEIIFRRSCFLFKR).

It belongs to the connexin family. Beta-type (group I) subfamily. In terms of assembly, a connexon is composed of a hexamer of connexins. In terms of tissue distribution, highly expressed in lens, where it is mainly found in lens fibers and to a lesser extent in lens epithelium. Weakly expressed in retina. Not detected in other tissues tested.

The protein resides in the cell membrane. Its function is as follows. Mediates calcium-independent ATP release, suggesting activity as a hemichannel. Does not form functional gap junctions. May play a non-essential role in eye lens development. In Mus musculus (Mouse), this protein is Gap junction epsilon-1 protein.